The chain runs to 231 residues: NADH-ubiquinone oxidoreductase chain 4 (231 aa).

The next 6 helical transmembrane spans lie at 1-21 (PIAG…YGII), 34-54 (MFLP…LTCL), 63-85 (IAYS…TPWG), 89-111 (AMAL…NTTY), 128-148 (ILPM…AIPP), and 169-189 (TIIM…HMFL).

The protein belongs to the complex I subunit 4 family.

The protein resides in the mitochondrion membrane. The enzyme catalyses a ubiquinone + NADH + 5 H(+)(in) = a ubiquinol + NAD(+) + 4 H(+)(out). Functionally, core subunit of the mitochondrial membrane respiratory chain NADH dehydrogenase (Complex I) that is believed to belong to the minimal assembly required for catalysis. Complex I functions in the transfer of electrons from NADH to the respiratory chain. The immediate electron acceptor for the enzyme is believed to be ubiquinone. In Deinagkistrodon acutus (Hundred-pace snake), this protein is NADH-ubiquinone oxidoreductase chain 4 (MT-ND4).